Consider the following 223-residue polypeptide: All-trans retinoic acid-induced differentiation factor (223 aa).

The first 25 residues, Met-1–Ala-25, serve as a signal peptide directing secretion. Residues Leu-26–Ser-193 are Extracellular-facing. In terms of domain architecture, EGF-like spans Gln-146–Met-187. 3 cysteine pairs are disulfide-bonded: Cys-150/Cys-165, Cys-159/Cys-175, and Cys-177/Cys-186. A helical transmembrane segment spans residues Leu-194–Gly-214. Residues Thr-215–Ser-223 lie on the Cytoplasmic side of the membrane.

Interacts with NELL1; the interaction promotes osteoblastic differentiation and mineralization. Interacts with SLC37A3; the interaction is direct and both proteins are mutually dependent for their stability.

It is found in the nucleus envelope. The protein resides in the cell membrane. It localises to the lysosome membrane. Promotes osteoblast cell differentiation and terminal mineralization. Plays a role in inducing the cell cycle arrest via inhibiting CCND1 expression in all-trans-retinoic acid (ATRA) signal pathway. In osteoclasts, forms a transporter complex with ATRAID for nitrogen-containing-bisphophonates (N-BPs) required for releasing N-BP molecules that have trafficked to lysosomes through fluid-phase endocytosis into the cytosol. In Mus musculus (Mouse), this protein is All-trans retinoic acid-induced differentiation factor (Atraid).